Consider the following 214-residue polypeptide: Pyridoxine/pyridoxamine 5'-phosphate oxidase (214 aa).

Residues 8–11 (RINY) and K66 each bind substrate. Residues 61–66 (RIVLIK), 76–77 (FT), R82, K83, and Q105 each bind FMN. Positions 123, 127, and 131 each coordinate substrate. FMN-binding positions include 140-141 (QS) and W184. 190–192 (RLH) lines the substrate pocket. R194 contributes to the FMN binding site.

This sequence belongs to the pyridoxamine 5'-phosphate oxidase family. Homodimer. FMN is required as a cofactor.

It catalyses the reaction pyridoxamine 5'-phosphate + O2 + H2O = pyridoxal 5'-phosphate + H2O2 + NH4(+). The enzyme catalyses pyridoxine 5'-phosphate + O2 = pyridoxal 5'-phosphate + H2O2. It functions in the pathway cofactor metabolism; pyridoxal 5'-phosphate salvage; pyridoxal 5'-phosphate from pyridoxamine 5'-phosphate: step 1/1. The protein operates within cofactor metabolism; pyridoxal 5'-phosphate salvage; pyridoxal 5'-phosphate from pyridoxine 5'-phosphate: step 1/1. Functionally, catalyzes the oxidation of either pyridoxine 5'-phosphate (PNP) or pyridoxamine 5'-phosphate (PMP) into pyridoxal 5'-phosphate (PLP). The protein is Pyridoxine/pyridoxamine 5'-phosphate oxidase of Burkholderia lata (strain ATCC 17760 / DSM 23089 / LMG 22485 / NCIMB 9086 / R18194 / 383).